Here is a 399-residue protein sequence, read N- to C-terminus: Chaperone protein DnaJ 1 (399 aa).

Residues 10–75 form the J domain; sequence DYYKVLGVPK…KKRKEYDEAR (66 aa). Residues 166-244 form a CR-type zinc finger; sequence GATVPLRMSS…CKGSGRAKSS (79 aa). Positions 179, 182, 195, 198, 218, 221, 232, and 235 each coordinate Zn(2+). CXXCXGXG motif repeat units lie at residues 179–186, 195–202, 218–225, and 232–239; these read CKACSGTG, CPTCVGTG, CPDCKGRG, and CEVCKGSG.

The protein belongs to the DnaJ family. Homodimer. Requires Zn(2+) as cofactor.

The protein resides in the cytoplasm. In terms of biological role, participates actively in the response to hyperosmotic and heat shock by preventing the aggregation of stress-denatured proteins and by disaggregating proteins, also in an autonomous, DnaK-independent fashion. Unfolded proteins bind initially to DnaJ; upon interaction with the DnaJ-bound protein, DnaK hydrolyzes its bound ATP, resulting in the formation of a stable complex. GrpE releases ADP from DnaK; ATP binding to DnaK triggers the release of the substrate protein, thus completing the reaction cycle. Several rounds of ATP-dependent interactions between DnaJ, DnaK and GrpE are required for fully efficient folding. Also involved, together with DnaK and GrpE, in the DNA replication of plasmids through activation of initiation proteins. The chain is Chaperone protein DnaJ 1 from Streptomyces coelicolor (strain ATCC BAA-471 / A3(2) / M145).